A 144-amino-acid polypeptide reads, in one-letter code: Large ribosomal subunit protein uL15 (144 aa).

The segment at 1–58 (MNLSNLRAPRKANEKKKRVGRGMGSGMGKTSARGHKGQRSRSGSRMMRGFEGGQMPLH) is disordered. Residues 8–20 (APRKANEKKKRVG) show a composition bias toward basic residues. Residues 40–49 (SRSGSRMMRG) show a composition bias toward low complexity.

This sequence belongs to the universal ribosomal protein uL15 family. In terms of assembly, part of the 50S ribosomal subunit.

Functionally, binds to the 23S rRNA. The chain is Large ribosomal subunit protein uL15 from Koribacter versatilis (strain Ellin345).